Reading from the N-terminus, the 569-residue chain is Methionine--tRNA ligase (569 aa).

Positions 11–21 (PYINGIKHLGN) match the 'HIGH' region motif. Cysteine 143, cysteine 146, cysteine 156, and cysteine 159 together coordinate Zn(2+). The 'KMSKS' region motif lies at 342–346 (KFSTS). Threonine 345 is a binding site for ATP.

It belongs to the class-I aminoacyl-tRNA synthetase family. MetG type 1 subfamily. As to quaternary structure, monomer. Requires Zn(2+) as cofactor.

The protein resides in the cytoplasm. The enzyme catalyses tRNA(Met) + L-methionine + ATP = L-methionyl-tRNA(Met) + AMP + diphosphate. Its function is as follows. Is required not only for elongation of protein synthesis but also for the initiation of all mRNA translation through initiator tRNA(fMet) aminoacylation. The polypeptide is Methionine--tRNA ligase (Caulobacter vibrioides (strain ATCC 19089 / CIP 103742 / CB 15) (Caulobacter crescentus)).